The chain runs to 382 residues: Prostaglandin D2 receptor 2 (382 aa).

At 1–32 (MANVTLKPLCPLLEEMVQLPNHSNSSLRYIDH) the chain is on the extracellular side. N-linked (GlcNAc...) asparagine glycans are attached at residues Asn-3, Asn-21, and Asn-24. The chain crosses the membrane as a helical span at residues 33 to 55 (VSVLLHGLASLLGLVENGLILFV). Residues 56–66 (VGCRMRQTVVT) are Cytoplasmic-facing. Residues 67–88 (TWVLHLALSDLLAAASLPFFTY) form a helical membrane-spanning segment. Over 89 to 105 (FLAVGHSWELGTTFCKL) the chain is Extracellular. A disulfide bridge connects residues Cys-103 and Cys-181. A helical transmembrane segment spans residues 106–126 (HSSVFFLNMFASGFLLSAISL). Residues 127-145 (DRCLQVVRPVWAQNHRTVA) lie on the Cytoplasmic side of the membrane. The chain crosses the membrane as a helical span at residues 146–167 (VAHRVCLMLWALAVLNTIPYFV). The Extracellular portion of the chain corresponds to 168–209 (FRDTIPRLDGRIMCYYNLLLWNPGPDRDTTCDYRQKALAVSK). Residues 210–230 (FLLAFMVPLAIIASSHVAVSL) traverse the membrane as a helical segment. Residues 231–246 (RLHHRGRQRTGRFVRL) are Cytoplasmic-facing. The helical transmembrane segment at 247–268 (VAAIVVAFVLCWGPYHIFSLLE) threads the bilayer. The Extracellular portion of the chain corresponds to 269 to 287 (ARAHSVTTLRQLASRGLPF). The chain crosses the membrane as a helical span at residues 288-307 (VTSLAFFNSVVNPLLYVFTC). The Cytoplasmic segment spans residues 308 to 357 (PDMLYKLRRSLRAVLESVLVEDSDQSGGLRNRRRRASSTATPASTLLLAD). Residues 329–332 (DSDQ) carry the Involved in the recycling of CRTH2 motif. Phosphoserine occurs at positions 330 and 344.

It belongs to the G-protein coupled receptor 1 family. Post-translationally, phosphorylated.

The protein resides in the cell membrane. Receptor for prostaglandin D2 (PGD2). Coupled to the G(i)-protein. Receptor activation may result in pertussis toxin-sensitive decreases in cAMP levels and Ca(2+) mobilization. PI3K signaling is also implicated in mediating PTGDR2 effects. PGD2 induced receptor internalization. CRTH2 internalization can be regulated by diverse kinases such as, PKC, PKA, GRK2, GPRK5/GRK5 and GRK6. Receptor activation is responsible, at least in part, in immune regulation and allergic/inflammation responses. This chain is Prostaglandin D2 receptor 2 (Ptgdr2), found in Mus musculus (Mouse).